The following is a 790-amino-acid chain: DNA ligase 1 (790 aa).

The transit peptide at 1 to 64 (MLAIRSSNYL…AFDALMSNAR (64 aa)) directs the protein to the mitochondrion. A disordered region spans residues 64 to 142 (RAAAKKKTPQ…TGAKKAKTLS (79 aa)). The short motif at 68 to 75 (KKKTPQTT) is the Nuclear localization signal 1 element. The segment covering 116–128 (DSANPRSDTSSIA) has biased composition (polar residues). The tract at residues 337 to 346 (KLRLGFSGQT) is interaction with target DNA. Position 442 (glutamate 442) interacts with ATP. The active-site N6-AMP-lysine intermediate is lysine 444. 2 residues coordinate ATP: arginine 449 and arginine 465. Position 497 (glutamate 497) interacts with Mg(2+). Positions 505 to 512 (KKKILPFQ) match the Nuclear localization signal 2 motif. The segment at 518 to 520 (ARK) is interaction with target DNA. Glutamate 596 serves as a coordination point for Mg(2+). The ATP site is built by lysine 601, arginine 614, and lysine 620. Residues 757–790 (DKKPEEATSSEQIADLYQAQKHNHPSNEVKGDDD) form a disordered region. The segment covering 781–790 (PSNEVKGDDD) has biased composition (basic and acidic residues).

This sequence belongs to the ATP-dependent DNA ligase family. It depends on Mg(2+) as a cofactor. In terms of tissue distribution, expressed in all vegetative and reproductive tissues.

The protein resides in the mitochondrion. It localises to the nucleus. It carries out the reaction ATP + (deoxyribonucleotide)n-3'-hydroxyl + 5'-phospho-(deoxyribonucleotide)m = (deoxyribonucleotide)n+m + AMP + diphosphate.. Essential protein. DNA ligase that seals nicks in double-stranded DNA during DNA replication, DNA recombination and DNA repair. Involved in repair of both single strand breaks (SSBs) and double strand breaks (DSBs). Required in the endosperm for embryogenesis, probably to repair DNA-breaks generated by DME. This chain is DNA ligase 1 (LIG1), found in Arabidopsis thaliana (Mouse-ear cress).